Here is a 341-residue protein sequence, read N- to C-terminus: UDP-3-O-(3-hydroxymyristoyl)glucosamine N-acyltransferase (341 aa).

The Proton acceptor role is filled by His-239.

The protein belongs to the transferase hexapeptide repeat family. LpxD subfamily. In terms of assembly, homotrimer.

The catalysed reaction is a UDP-3-O-[(3R)-3-hydroxyacyl]-alpha-D-glucosamine + a (3R)-hydroxyacyl-[ACP] = a UDP-2-N,3-O-bis[(3R)-3-hydroxyacyl]-alpha-D-glucosamine + holo-[ACP] + H(+). The enzyme catalyses UDP-3-O-[(3R)-3-hydroxytetradecanoyl]-alpha-D-glucosamine + (3R)-hydroxytetradecanoyl-[ACP] = UDP-2-N,3-O-bis[(3R)-3-hydroxytetradecanoyl]-alpha-D-glucosamine + holo-[ACP] + H(+). It functions in the pathway glycolipid biosynthesis; lipid IV(A) biosynthesis; lipid IV(A) from (3R)-3-hydroxytetradecanoyl-[acyl-carrier-protein] and UDP-N-acetyl-alpha-D-glucosamine: step 3/6. Its function is as follows. Catalyzes the N-acylation of UDP-3-O-(hydroxytetradecanoyl)glucosamine using 3-hydroxytetradecanoyl-ACP as the acyl donor. Is involved in the biosynthesis of lipid A, a phosphorylated glycolipid that anchors the lipopolysaccharide to the outer membrane of the cell. The sequence is that of UDP-3-O-(3-hydroxymyristoyl)glucosamine N-acyltransferase from Salmonella paratyphi A (strain ATCC 9150 / SARB42).